The primary structure comprises 727 residues: Engulfment and cell motility protein 1 (727 aa).

Phosphotyrosine; by HCK is present on tyrosine 18. 2 positions are modified to N6-acetyllysine: lysine 100 and lysine 105. Tyrosine 216 is subject to Phosphotyrosine; by HCK. The ELMO domain occupies 319 to 492 (AQRDIIFELR…VVKEQVMRAL (174 aa)). A Phosphoserine modification is found at serine 344. Tyrosine 395 and tyrosine 511 each carry phosphotyrosine; by HCK. The PH domain occupies 555–676 (RLVEGTCFRK…DGLNALLGKD (122 aa)). Positions 707–714 (PDAPPPIP) match the SH3-binding motif. A Phosphotyrosine; by HCK modification is found at tyrosine 720.

Interacts with ADGRB1. Interacts directly with the SH3-domain of DOCK1 via its SH3-binding site. Part of a complex with DOCK1 and RAC1. Part of a complex with DOCK1 and CRK isoform CRK-II. Interacts with PLEKHG6. Interacts with HCK (via SH3 domain). Interacts with ADGRB3. Interacts with DOCK5. Phosphorylated by HCK. In terms of tissue distribution, widely expressed, with a higher expression in the spleen and placenta.

Its subcellular location is the cytoplasm. The protein localises to the cell membrane. In terms of biological role, involved in cytoskeletal rearrangements required for phagocytosis of apoptotic cells and cell motility. Acts in association with DOCK1 and CRK. Was initially proposed to be required in complex with DOCK1 to activate Rac Rho small GTPases. May enhance the guanine nucleotide exchange factor (GEF) activity of DOCK1. The sequence is that of Engulfment and cell motility protein 1 (ELMO1) from Homo sapiens (Human).